The primary structure comprises 452 residues: MYPGAGRPTYHKQQEQKGPYGQPQYQQQYAPPYPERYQQPYYQPPPHDGYSRPSMPPPSHNYAAAQYERPSCPPPGYAPHQGGFPAPGPPLQGRPRDLMRSDIQMNHSMDYSNIQGPASYTRPEFVAPPPQERQFLDPGNRSVEYQYSQCTGNRKALLIGINYFNSSAELRGCINDVQNIKNFLISRYGYREENMVILTDDQHDPVRIPTKANILRAMHWLVQGAQPNDSLFLHYSGHGGETEDLDGDEQDGKDSTLYPVDFETNGHIVDDEIHDILVKPLAPGVRLTALIDACHSGSALDLPYMYSTKGIIKEPNVWKDIGSNSMQAAMAYVTGNTGDMFTSLKSLASTVSRKATGSGGVDTERVRQTKFSPADVIMFSGSKDNQTSADAVENGVATGAMSYSFVKVMSQQPQQTYLSLLQNMRTELKGKYTQKPQLSCSHPLDVNLQFVL.

The disordered stretch occupies residues 1–97; sequence MYPGAGRPTY…GPPLQGRPRD (97 aa). Residues 16–41 are compositionally biased toward low complexity; that stretch reads QKGPYGQPQYQQQYAPPYPERYQQPY. Active-site residues include His-238 and Cys-294.

It belongs to the peptidase C14B family.

Its function is as follows. Involved in cell death (apoptosis). The protein is Metacaspase-1 (MCA1) of Eremothecium gossypii (strain ATCC 10895 / CBS 109.51 / FGSC 9923 / NRRL Y-1056) (Yeast).